Reading from the N-terminus, the 415-residue chain is Gamma-glutamyl phosphate reductase (415 aa).

Belongs to the gamma-glutamyl phosphate reductase family.

It is found in the cytoplasm. It catalyses the reaction L-glutamate 5-semialdehyde + phosphate + NADP(+) = L-glutamyl 5-phosphate + NADPH + H(+). The protein operates within amino-acid biosynthesis; L-proline biosynthesis; L-glutamate 5-semialdehyde from L-glutamate: step 2/2. Its function is as follows. Catalyzes the NADPH-dependent reduction of L-glutamate 5-phosphate into L-glutamate 5-semialdehyde and phosphate. The product spontaneously undergoes cyclization to form 1-pyrroline-5-carboxylate. The chain is Gamma-glutamyl phosphate reductase from Mycolicibacterium vanbaalenii (strain DSM 7251 / JCM 13017 / BCRC 16820 / KCTC 9966 / NRRL B-24157 / PYR-1) (Mycobacterium vanbaalenii).